Reading from the N-terminus, the 405-residue chain is Deoxyguanosinetriphosphate triphosphohydrolase-like protein (405 aa).

The 145-residue stretch at 75–219 (RLTHTIEVAQ…AAIADDIAYN (145 aa)) folds into the HD domain.

This sequence belongs to the dGTPase family. Type 2 subfamily.

This is Deoxyguanosinetriphosphate triphosphohydrolase-like protein from Rhizobium leguminosarum bv. trifolii (strain WSM2304).